The primary structure comprises 648 residues: MREPLLQLSGIRRHFGDGERRVEVLKGIDLTIARGEMVAIVGASGSGKSTLLNILGCLDQPSEGSYRVAGRETSRLTADALATLRREHFGFIFQRYHLLGDLSARDNVALPALYAGLAGDARKARAERLLQRLGLGSRLDYKPSQLSGGQQQRVSIARALINGGQVILADEPTGALDSQSGAEVLGILGALHRQGHTLVLVTHDMAIAEQAERIIELKDGAVVADRRREPTPPSPAPTTSRADTGGRGGLAGRLGAAFKMALLAMRAQRMRTFLTMLGIIIGIAAVVSVVALGRGSQQQVLANINAMGTSTLEIFPGSGFGDRRAEAVQTLRVEDAEALAGLGYVHSVTPSLATSVTLRRGSQAVLGSVNGVGEQFFQVRGYRLLQGMLFDAASVTALAQEVVIDENSLARLFGAGESPLGQVILLGSLPCRVIGVVARNQSGFGSDENLNVWIPHTTAMTRMLGQSHLRSISVRVQDEVALAAAEDGISRLLRERHGAQDFFVLNTDSIRQAITSTNATLTLLIAMIALISLVVGGIGVMNIMLVSVSERTREIGVRMAVGARTGDILQQFLIEAVLVCLLGGAAGVLLSLLIGVLFEHFSSQFTLSYSLDAVLMAFFCSSLIGVLFGFFPARRAARMDPIHALERE.

One can recognise an ABC transporter domain in the interval 6 to 244 (LQLSGIRRHF…PAPTTSRADT (239 aa)). Residue 42-49 (GASGSGKS) participates in ATP binding. The disordered stretch occupies residues 222–248 (VVADRRREPTPPSPAPTTSRADTGGRG). 4 consecutive transmembrane segments (helical) span residues 273–293 (FLTM…VALG), 521–541 (LTLL…IGVM), 578–598 (LVCL…GVLF), and 613–633 (AVLM…FFPA).

The protein belongs to the ABC transporter superfamily. Macrolide exporter (TC 3.A.1.122) family. Homodimer. Part of the tripartite efflux system MacAB-TolC, which is composed of an inner membrane transporter, MacB, a periplasmic membrane fusion protein, MacA, and an outer membrane component, TolC. The complex forms a large protein conduit and can translocate molecules across both the inner and outer membranes. Interacts with MacA.

The protein resides in the cell inner membrane. Part of the tripartite efflux system MacAB-TolC. MacB is a non-canonical ABC transporter that contains transmembrane domains (TMD), which form a pore in the inner membrane, and an ATP-binding domain (NBD), which is responsible for energy generation. Confers resistance against macrolides. This chain is Macrolide export ATP-binding/permease protein MacB 1, found in Aeromonas hydrophila subsp. hydrophila (strain ATCC 7966 / DSM 30187 / BCRC 13018 / CCUG 14551 / JCM 1027 / KCTC 2358 / NCIMB 9240 / NCTC 8049).